Consider the following 1416-residue polypeptide: Tiny macrocysts protein B (1416 aa).

8 consecutive transmembrane segments (helical) span residues 47–67 (ILTILSMLIEFCQLSSFGFKH), 93–113 (FGYLGFTILFWIAVGLLILGF), 140–160 (FVSFSVAVLFIPIISLLLIGL), 185–205 (ANLPIAVISIILIVVFSIVAF), 231–251 (VTVLFAKFVFAFFNSLVDFVP), 253–273 (LTSITFFVFMVILTFGSIIVL), 285–305 (SGFYTVVLWVSFMTLVTMGIN), and 315–335 (ITIVGVFFAFPIGFFSNMFYF). Positions 356-372 (LKDANKKGKRNSVEKES) are enriched in basic and acidic residues. Disordered regions lie at residues 356 to 377 (LKDANKKGKRNSVEKESSPTSK) and 662 to 691 (IEKSGSKSGSSKSKDDSSESSSSSKGRRGK). 2 helical membrane-spanning segments follow: residues 706–726 (WLMIGTTCCCIIFLIVVLVVF) and 953–973 (AILYTWCGIFAVLFLICAVLF). Disordered stretches follow at residues 1018–1103 (RDNL…RPLM) and 1119–1144 (NVRLQAKDEEITNGGGERKGSDATRT). Over residues 1024-1039 (TTDDDGRDDHLGEDDN) the composition is skewed to acidic residues. Composition is skewed to low complexity over residues 1048 to 1062 (NNNNNNNNNNNNNNN) and 1083 to 1094 (SSSGSNVLNTSS). Over residues 1123 to 1144 (QAKDEEITNGGGERKGSDATRT) the composition is skewed to basic and acidic residues. A run of 3 helical transmembrane segments spans residues 1179–1199 (ILATFLLFGFITMGIWVTFTV), 1325–1345 (WFLALIDYIFIGLDTATFTYF), and 1358–1378 (VLTAILSVSCVILLVVHVVLF).

The protein resides in the membrane. In terms of biological role, regulator of the cAMP signaling pathway specific to sexual development. Controls the levels of external cAMP by regulating the expression of phosphodiesterase pdsA and its inhibitor pdiA. The polypeptide is Tiny macrocysts protein B (tmcB) (Dictyostelium discoideum (Social amoeba)).